Reading from the N-terminus, the 759-residue chain is 1,4-alpha-glucan branching enzyme GlgB (759 aa).

Positions 1–22 (MAKTKGLPKDTAVTPSPHLRPH) are disordered. The active-site Nucleophile is Asp-422. The active-site Proton donor is Glu-475.

The protein belongs to the glycosyl hydrolase 13 family. GlgB subfamily. Monomer.

It carries out the reaction Transfers a segment of a (1-&gt;4)-alpha-D-glucan chain to a primary hydroxy group in a similar glucan chain.. It functions in the pathway glycan biosynthesis; glycogen biosynthesis. Its function is as follows. Catalyzes the formation of the alpha-1,6-glucosidic linkages in glycogen by scission of a 1,4-alpha-linked oligosaccharide from growing alpha-1,4-glucan chains and the subsequent attachment of the oligosaccharide to the alpha-1,6 position. The protein is 1,4-alpha-glucan branching enzyme GlgB of Mycobacterium sp. (strain KMS).